The sequence spans 157 residues: SsrA-binding protein (157 aa).

This sequence belongs to the SmpB family.

It localises to the cytoplasm. Required for rescue of stalled ribosomes mediated by trans-translation. Binds to transfer-messenger RNA (tmRNA), required for stable association of tmRNA with ribosomes. tmRNA and SmpB together mimic tRNA shape, replacing the anticodon stem-loop with SmpB. tmRNA is encoded by the ssrA gene; the 2 termini fold to resemble tRNA(Ala) and it encodes a 'tag peptide', a short internal open reading frame. During trans-translation Ala-aminoacylated tmRNA acts like a tRNA, entering the A-site of stalled ribosomes, displacing the stalled mRNA. The ribosome then switches to translate the ORF on the tmRNA; the nascent peptide is terminated with the 'tag peptide' encoded by the tmRNA and targeted for degradation. The ribosome is freed to recommence translation, which seems to be the essential function of trans-translation. This chain is SsrA-binding protein, found in Levilactobacillus brevis (strain ATCC 367 / BCRC 12310 / CIP 105137 / JCM 1170 / LMG 11437 / NCIMB 947 / NCTC 947) (Lactobacillus brevis).